Here is a 394-residue protein sequence, read N- to C-terminus: Elongation factor Tu 2 (394 aa).

Residues 10-204 (KPHVNVGTIG…YLDSYIPEPE (195 aa)) enclose the tr-type G domain. The interval 19–26 (GHVDHGKT) is G1. Position 19-26 (19-26 (GHVDHGKT)) interacts with GTP. Residue threonine 26 coordinates Mg(2+). The interval 60-64 (GITIN) is G2. Positions 81–84 (DCPG) are G3. Residues 81–85 (DCPGH) and 136–139 (NKCD) each bind GTP. A G4 region spans residues 136–139 (NKCD). A G5 region spans residues 174–176 (SAL).

Belongs to the TRAFAC class translation factor GTPase superfamily. Classic translation factor GTPase family. EF-Tu/EF-1A subfamily. In terms of assembly, monomer.

It is found in the cytoplasm. It carries out the reaction GTP + H2O = GDP + phosphate + H(+). Its function is as follows. GTP hydrolase that promotes the GTP-dependent binding of aminoacyl-tRNA to the A-site of ribosomes during protein biosynthesis. The polypeptide is Elongation factor Tu 2 (Serratia proteamaculans (strain 568)).